Here is a 275-residue protein sequence, read N- to C-terminus: Malonyl-[acyl-carrier protein] O-methyltransferase (275 aa).

The protein belongs to the methyltransferase superfamily.

It catalyses the reaction malonyl-[ACP] + S-adenosyl-L-methionine = malonyl-[ACP] methyl ester + S-adenosyl-L-homocysteine. The protein operates within cofactor biosynthesis; biotin biosynthesis. Its function is as follows. Converts the free carboxyl group of a malonyl-thioester to its methyl ester by transfer of a methyl group from S-adenosyl-L-methionine (SAM). It allows to synthesize pimeloyl-ACP via the fatty acid synthetic pathway. The protein is Malonyl-[acyl-carrier protein] O-methyltransferase of Methylococcus capsulatus (strain ATCC 33009 / NCIMB 11132 / Bath).